A 467-amino-acid polypeptide reads, in one-letter code: Gamma-aminobutyric acid receptor subunit gamma-3 (467 aa).

The N-terminal stretch at 1–17 (MAAKLLLLLCLFSGLHA) is a signal peptide. The Extracellular portion of the chain corresponds to 18–256 (RSRRVEEDEN…FELSRRMGYF (239 aa)). Residue Asn-110 is glycosylated (N-linked (GlcNAc...) asparagine). Cys-171 and Cys-185 form a disulfide bridge. Asn-228 carries an N-linked (GlcNAc...) asparagine glycan. Residues 257 to 277 (TIQTYIPCILTVVLSWVSFWI) form a helical membrane-spanning segment. Topologically, residues 278 to 283 (KKDATP) are cytoplasmic. A helical transmembrane segment spans residues 284–303 (ARTTLGITTVLTMTTLSTIA). The Extracellular segment spans residues 304-311 (RKSLPRVS). The chain crosses the membrane as a helical span at residues 312–332 (YVTAMDLFVTVCFLFVFAALM). The Cytoplasmic segment spans residues 333–446 (EYATLNYYSS…DVSELDSYSR (114 aa)). A helical transmembrane segment spans residues 447–467 (VFFPTSFLLFNLVYWVGYLYL).

Belongs to the ligand-gated ion channel (TC 1.A.9) family. Gamma-aminobutyric acid receptor (TC 1.A.9.5) subfamily. GABRG3 sub-subfamily. In terms of assembly, heteropentamer, formed by a combination of alpha (GABRA1-6), beta (GABRB1-3), gamma (GABRG1-3), delta (GABRD), epsilon (GABRE), rho (GABRR1-3), pi (GABRP) and theta (GABRQ) chains, each subunit exhibiting distinct physiological and pharmacological properties. Post-translationally, may be palmitoylated. As to expression, expressed in brain.

The protein localises to the postsynaptic cell membrane. It is found in the cell membrane. The enzyme catalyses chloride(in) = chloride(out). Functionally, gamma subunit of the heteropentameric ligand-gated chloride channel gated by gamma-aminobutyric acid (GABA), a major inhibitory neurotransmitter in the brain. GABA-gated chloride channels, also named GABA(A) receptors (GABAAR), consist of five subunits arranged around a central pore and contain GABA active binding site(s) located at the alpha and beta subunit interface(s). When activated by GABA, GABAARs selectively allow the flow of chloride across the cell membrane down their electrochemical gradient. This is Gamma-aminobutyric acid receptor subunit gamma-3 from Mus musculus (Mouse).